The sequence spans 69 residues: Large ribosomal subunit protein bL31 (69 aa).

Positions 16, 18, 36, and 39 each coordinate Zn(2+).

Belongs to the bacterial ribosomal protein bL31 family. Type A subfamily. Part of the 50S ribosomal subunit. Zn(2+) serves as cofactor.

Its function is as follows. Binds the 23S rRNA. This is Large ribosomal subunit protein bL31 from Thermosipho africanus (strain TCF52B).